The sequence spans 179 residues: Probable WRKY transcription factor 24 (179 aa).

The segment at residues Ser-92 to Glu-157 is a DNA-binding region (WRKY).

This sequence belongs to the WRKY group II-c family.

It is found in the nucleus. In terms of biological role, transcription factor. Interacts specifically with the W box (5'-(T)TGAC[CT]-3'), a frequently occurring elicitor-responsive cis-acting element. The chain is Probable WRKY transcription factor 24 (WRKY24) from Arabidopsis thaliana (Mouse-ear cress).